A 337-amino-acid chain; its full sequence is Casein kinase I isoform alpha-like (337 aa).

Position 8 is an N6-acetyllysine (K8). Residues 17–285 (YKLVRKIGSG…YLRQLFRILF (269 aa)) form the Protein kinase domain. Residues 23 to 31 (IGSGSFGDV) and K46 contribute to the ATP site. D136 serves as the catalytic Proton acceptor. Low complexity predominate over residues 309 to 325 (AASSSGQGQQAQTQTGK). The tract at residues 309-337 (AASSSGQGQQAQTQTGKQTEKNKNNVKDN) is disordered. Residues 326 to 337 (QTEKNKNNVKDN) show a composition bias toward basic and acidic residues.

The protein belongs to the protein kinase superfamily. CK1 Ser/Thr protein kinase family. Casein kinase I subfamily. As to quaternary structure, interacts with FAM83A, FAM83B, FAM83C, FAM83D, FAM83E, FAM83F, FAM83G and FAM83H (via DUF1669).

The protein resides in the cytoplasm. It catalyses the reaction L-seryl-[protein] + ATP = O-phospho-L-seryl-[protein] + ADP + H(+). The enzyme catalyses L-threonyl-[protein] + ATP = O-phospho-L-threonyl-[protein] + ADP + H(+). Casein kinases are operationally defined by their preferential utilization of acidic proteins such as caseins as substrates. It can phosphorylate a large number of proteins. Participates in Wnt signaling. In Homo sapiens (Human), this protein is Casein kinase I isoform alpha-like (CSNK1A1L).